Consider the following 118-residue polypeptide: Large ribosomal subunit protein uL18 (118 aa).

It belongs to the universal ribosomal protein uL18 family. As to quaternary structure, part of the 50S ribosomal subunit; part of the 5S rRNA/L5/L18/L25 subcomplex. Contacts the 5S and 23S rRNAs.

This is one of the proteins that bind and probably mediate the attachment of the 5S RNA into the large ribosomal subunit, where it forms part of the central protuberance. The polypeptide is Large ribosomal subunit protein uL18 (Nitratiruptor sp. (strain SB155-2)).